Reading from the N-terminus, the 294-residue chain is Shikimate dehydrogenase (NADP(+)) (294 aa).

Residues 25–27 (SAS) and threonine 72 contribute to the shikimate site. The active-site Proton acceptor is the lysine 76. 2 residues coordinate shikimate: asparagine 97 and aspartate 112. NADP(+) contacts are provided by residues 136-140 (GAGGA) and threonine 234. Tyrosine 236 is a shikimate binding site. Glycine 257 is a binding site for NADP(+).

The protein belongs to the shikimate dehydrogenase family. Homodimer.

It carries out the reaction shikimate + NADP(+) = 3-dehydroshikimate + NADPH + H(+). The protein operates within metabolic intermediate biosynthesis; chorismate biosynthesis; chorismate from D-erythrose 4-phosphate and phosphoenolpyruvate: step 4/7. Its function is as follows. Involved in the biosynthesis of the chorismate, which leads to the biosynthesis of aromatic amino acids. Catalyzes the reversible NADPH linked reduction of 3-dehydroshikimate (DHSA) to yield shikimate (SA). The chain is Shikimate dehydrogenase (NADP(+)) from Symbiobacterium thermophilum (strain DSM 24528 / JCM 14929 / IAM 14863 / T).